A 359-amino-acid chain; its full sequence is Phospho-N-acetylmuramoyl-pentapeptide-transferase (359 aa).

A run of 10 helical transmembrane segments spans residues 24-44 (FRAL…SPIF), 72-92 (FVPS…SILL), 100-120 (TWIM…DDFV), 134-154 (MLGQ…VMHI), 170-190 (LGYF…NAVN), 197-217 (GLAI…SYVA), 234-254 (AGEL…FLWF), 261-281 (MFMG…LAIM), 289-309 (IIAG…VSVF), and 336-356 (KIVV…IATL).

This sequence belongs to the glycosyltransferase 4 family. MraY subfamily. Mg(2+) is required as a cofactor.

The protein resides in the cell inner membrane. It carries out the reaction UDP-N-acetyl-alpha-D-muramoyl-L-alanyl-gamma-D-glutamyl-meso-2,6-diaminopimeloyl-D-alanyl-D-alanine + di-trans,octa-cis-undecaprenyl phosphate = di-trans,octa-cis-undecaprenyl diphospho-N-acetyl-alpha-D-muramoyl-L-alanyl-D-glutamyl-meso-2,6-diaminopimeloyl-D-alanyl-D-alanine + UMP. Its pathway is cell wall biogenesis; peptidoglycan biosynthesis. Catalyzes the initial step of the lipid cycle reactions in the biosynthesis of the cell wall peptidoglycan: transfers peptidoglycan precursor phospho-MurNAc-pentapeptide from UDP-MurNAc-pentapeptide onto the lipid carrier undecaprenyl phosphate, yielding undecaprenyl-pyrophosphoryl-MurNAc-pentapeptide, known as lipid I. This is Phospho-N-acetylmuramoyl-pentapeptide-transferase from Hydrogenobaculum sp. (strain Y04AAS1).